Reading from the N-terminus, the 1310-residue chain is Major viral transcription factor ICP4 homolog (1310 aa).

Disordered stretches follow at residues 117–271 (AGAR…GPVE), 285–454 (GAKA…TPII), and 636–697 (GSSP…LLDK). A compositionally biased stretch (basic and acidic residues) spans 341–350 (PVEKKPKSRE). Low complexity-rich tracts occupy residues 351–364 (FVSS…WGSS), 392–407 (PSPS…DGGS), and 648–666 (PSPT…SAAA). Residues 677-685 (RLRTPRKRK) carry the Nuclear localization signal motif. Phosphoserine; by viral VZV ORF66 occurs at positions 686 and 722. 2 disordered regions span residues 1193 to 1258 (GTRF…SFGV) and 1282 to 1310 (ELLS…QSRG). The span at 1217-1227 (RTADDREHALE) shows a compositional bias: basic and acidic residues. A compositionally biased stretch (acidic residues) spans 1228-1250 (LDDWEVGCEDAWDSEEGGGDDGD).

The protein belongs to the herpesviridae ICP4 family. As to quaternary structure, interacts with IE4 and IE63. Interacts with host USF1 and SP1. In terms of processing, phosphorylated by ORF66 protein kinase on Ser-686 and Ser-722. Also phosphorylated by ORF47 protein kinase and by human CSNK2A1/CKII.

Its subcellular location is the host nucleus. It is found in the host cytoplasm. It localises to the virion tegument. Transcriptional transactivator. May interact with and recruit specific components of the general transcription machinery to viral promoters and stabilize their formation for transcription initiation. Negatively regulates its own transcription. This immediate early (EI) protein may be necessary in virion for viral pathogenesis. The protein is Major viral transcription factor ICP4 homolog of Homo sapiens (Human).